We begin with the raw amino-acid sequence, 58 residues long: Large ribosomal subunit protein uL30 (58 aa).

Belongs to the universal ribosomal protein uL30 family. Part of the 50S ribosomal subunit.

The protein is Large ribosomal subunit protein uL30 of Pseudomonas savastanoi pv. phaseolicola (strain 1448A / Race 6) (Pseudomonas syringae pv. phaseolicola (strain 1448A / Race 6)).